A 331-amino-acid polypeptide reads, in one-letter code: Probable allantoicase (331 aa).

The protein belongs to the allantoicase family.

It catalyses the reaction allantoate + H2O = (S)-ureidoglycolate + urea. It participates in nitrogen metabolism; (S)-allantoin degradation; (S)-ureidoglycolate from allantoate (aminidohydrolase route): step 1/1. The chain is Probable allantoicase from Stutzerimonas stutzeri (strain A1501) (Pseudomonas stutzeri).